Consider the following 1611-residue polypeptide: Pentafunctional AROM polypeptide (1611 aa).

Residues 1 to 391 are 3-dehydroquinate synthase; the sequence is MSSSSADVLK…YEEKASVVAD (391 aa). NAD(+)-binding positions include 47–49, 84–87, 115–117, and Asp120; these read DTN, EGAK, and GGV. Arg131 is a binding site for 7-phospho-2-dehydro-3-deoxy-D-arabino-heptonate. 140–141 is an NAD(+) binding site; that stretch reads TT. Residues Asp147 and Lys153 each coordinate 7-phospho-2-dehydro-3-deoxy-D-arabino-heptonate. Lys162 contributes to the NAD(+) binding site. Residue Asn163 coordinates 7-phospho-2-dehydro-3-deoxy-D-arabino-heptonate. NAD(+)-binding positions include 180-183 and Asn191; that span reads FLTT. A Zn(2+)-binding site is contributed by Glu195. Residues 195–198 and Lys257 each bind 7-phospho-2-dehydro-3-deoxy-D-arabino-heptonate; that span reads EVIK. Glu267 (proton acceptor; for 3-dehydroquinate synthase activity) is an active-site residue. Residues 271 to 275 and His278 contribute to the 7-phospho-2-dehydro-3-deoxy-D-arabino-heptonate site; that span reads RNLVN. His278 contacts Zn(2+). The Proton acceptor; for 3-dehydroquinate synthase activity role is filled by His282. The 7-phospho-2-dehydro-3-deoxy-D-arabino-heptonate site is built by His294 and Lys363. His294 is a Zn(2+) binding site. Residues 404–863 are EPSP synthase; it reads VKAATPTKSP…WDDLQNKIGV (460 aa). Catalysis depends on Cys845, which acts as the For EPSP synthase activity. The shikimate kinase stretch occupies residues 892–1093; the sequence is DRPIFLIGMR…SVGNPTSFLS (202 aa). Position 899–906 (899–906) interacts with ATP; that stretch reads GMRGAGKT. Residues 1094–1318 are 3-dehydroquinase; sequence LTFPDVTPAL…AAPGQLTARE (225 aa). The active-site Proton acceptor; for 3-dehydroquinate dehydratase activity is the His1220. Lys1248 serves as the catalytic Schiff-base intermediate with substrate; for 3-dehydroquinate dehydratase activity. The tract at residues 1331–1611 is shikimate dehydrogenase; the sequence is AKKFVLFGSP…RKAVLDKYFA (281 aa).

In the N-terminal section; belongs to the sugar phosphate cyclases superfamily. Dehydroquinate synthase family. It in the 2nd section; belongs to the EPSP synthase family. This sequence in the 3rd section; belongs to the shikimate kinase family. The protein in the 4th section; belongs to the type-I 3-dehydroquinase family. In the C-terminal section; belongs to the shikimate dehydrogenase family. As to quaternary structure, homodimer. Zn(2+) is required as a cofactor.

It is found in the cytoplasm. It catalyses the reaction 7-phospho-2-dehydro-3-deoxy-D-arabino-heptonate = 3-dehydroquinate + phosphate. It carries out the reaction 3-dehydroquinate = 3-dehydroshikimate + H2O. The catalysed reaction is shikimate + NADP(+) = 3-dehydroshikimate + NADPH + H(+). The enzyme catalyses shikimate + ATP = 3-phosphoshikimate + ADP + H(+). It catalyses the reaction 3-phosphoshikimate + phosphoenolpyruvate = 5-O-(1-carboxyvinyl)-3-phosphoshikimate + phosphate. Its pathway is metabolic intermediate biosynthesis; chorismate biosynthesis; chorismate from D-erythrose 4-phosphate and phosphoenolpyruvate: step 2/7. It functions in the pathway metabolic intermediate biosynthesis; chorismate biosynthesis; chorismate from D-erythrose 4-phosphate and phosphoenolpyruvate: step 3/7. The protein operates within metabolic intermediate biosynthesis; chorismate biosynthesis; chorismate from D-erythrose 4-phosphate and phosphoenolpyruvate: step 4/7. It participates in metabolic intermediate biosynthesis; chorismate biosynthesis; chorismate from D-erythrose 4-phosphate and phosphoenolpyruvate: step 5/7. Its pathway is metabolic intermediate biosynthesis; chorismate biosynthesis; chorismate from D-erythrose 4-phosphate and phosphoenolpyruvate: step 6/7. In terms of biological role, the AROM polypeptide catalyzes 5 consecutive enzymatic reactions in prechorismate polyaromatic amino acid biosynthesis. This Cryptococcus neoformans var. neoformans serotype D (strain B-3501A) (Filobasidiella neoformans) protein is Pentafunctional AROM polypeptide.